The chain runs to 353 residues: 3-dehydroquinate synthase (353 aa).

It belongs to the archaeal-type DHQ synthase family.

The catalysed reaction is 2-amino-2,3,7-trideoxy-D-lyxo-hept-6-ulosonate + NAD(+) + H2O = 3-dehydroquinate + NH4(+) + NADH + H(+). In terms of biological role, catalyzes the oxidative deamination and cyclization of 2-amino-3,7-dideoxy-D-threo-hept-6-ulosonic acid (ADH) to yield 3-dehydroquinate (DHQ), which is fed into the canonical shikimic pathway of aromatic amino acid biosynthesis. This is 3-dehydroquinate synthase from Nitrosopumilus maritimus (strain SCM1).